Reading from the N-terminus, the 287-residue chain is Pirin-1 (287 aa).

N-acetylthreonine is present on threonine 2.

Belongs to the pirin family. In terms of assembly, interacts with the G protein alpha-1 subunit GPA1. Interacts with NFYB6 and NFYB9.

Its subcellular location is the nucleus. Involved in abscisic acid signal transduction. Plays a role in seed germination and early seedling development. Involved in the blue light (BL) signaling. The sequence is that of Pirin-1 (PRN1) from Arabidopsis thaliana (Mouse-ear cress).